The following is a 263-amino-acid chain: R-spondin-1 (263 aa).

The first 20 residues, 1–20 (MRLGLCVVALVLSWTHLTIS), serve as a signal peptide directing secretion. 2 FU repeats span residues 34 to 85 (AEGS…GYFD) and 91 to 135 (MNKC…GSSA). 11 cysteine pairs are disulfide-bonded: Cys40/Cys47, Cys44/Cys53, Cys56/Cys75, Cys79/Cys94, Cys97/Cys105, Cys102/Cys111, Cys114/Cys125, Cys129/Cys142, Cys148/Cys190, Cys159/Cys166, and Cys199/Cys206. N-linked (GlcNAc...) asparagine glycosylation is present at Asn137. One can recognise a TSP type-1 domain in the interval 147 to 207 (QCEMSEWSPW…RCTVRRVPCP (61 aa)). 2 C-linked (Man) tryptophan glycosylation sites follow: Trp153 and Trp156. Residues 206 to 263 (CPEGQKRRKGGQGRRENANRNLARKESKEAGAGSRRRKGQQQQQQQGTVGPLTSAGPA) form a disordered region. A compositionally biased stretch (basic and acidic residues) spans 218 to 234 (GRRENANRNLARKESKE).

This sequence belongs to the R-spondin family. In terms of assembly, interacts with the extracellular domain of FZD8 and LRP6. It however does not form a ternary complex with FZD8 and LRP6. Interacts with WNT1. Binds heparin. Interacts with ZNRF3; promoting indirect interaction between ZNRF3 and LGR4 and membrane clearance of ZNRF3. Interacts with LGR4, LGR5 and LGR6. Identified in a complex composed of RNF43, LGR5 and RSPO1. Interacts (via FU repeats) with KREM1. In terms of processing, C-, and N-glycosylated. N-glycosylation at Asn-137, negatively influences its secretion and enhancing effect on Wnt/beta-catenin signaling. C-mannosylation at Trp-156 by DPY19L3 is required for its secretion and regulates the enhancing activity of Wnt signaling. Abundantly expressed in adrenal glands, ovary, testis, thyroid and trachea but not in bone marrow, spinal cord, stomach, leukocytes colon, small intestine, prostate, thymus and spleen.

It localises to the secreted. Its subcellular location is the nucleus. Activator of the canonical Wnt signaling pathway by acting as a ligand for LGR4-6 receptors. Upon binding to LGR4-6 (LGR4, LGR5 or LGR6), LGR4-6 associate with phosphorylated LRP6 and frizzled receptors that are activated by extracellular Wnt receptors, triggering the canonical Wnt signaling pathway to increase expression of target genes. Also regulates the canonical Wnt/beta-catenin-dependent pathway and non-canonical Wnt signaling by acting as an inhibitor of ZNRF3, an important regulator of the Wnt signaling pathway. Acts as a ligand for frizzled FZD8 and LRP6. May negatively regulate the TGF-beta pathway. Has a essential roles in ovary determination. Regulates Wnt signaling by antagonizing DKK1/KREM1-mediated internalization of LRP6 through an interaction with KREM1. The polypeptide is R-spondin-1 (RSPO1) (Homo sapiens (Human)).